The following is a 419-amino-acid chain: Tyrosine--tRNA ligase (419 aa).

Tyr34 contacts L-tyrosine. The 'HIGH' region signature appears at 39–48 (PSGDSMHIGH). L-tyrosine is bound by residues Tyr168 and Gln172. Residues 230 to 234 (KFGKS) carry the 'KMSKS' region motif. Residue Lys233 coordinates ATP. Residues 352-418 (VNLVDWLVSL…GKKKYFLVSY (67 aa)) form the S4 RNA-binding domain.

This sequence belongs to the class-I aminoacyl-tRNA synthetase family. TyrS type 1 subfamily. Homodimer.

Its subcellular location is the cytoplasm. It catalyses the reaction tRNA(Tyr) + L-tyrosine + ATP = L-tyrosyl-tRNA(Tyr) + AMP + diphosphate + H(+). In terms of biological role, catalyzes the attachment of tyrosine to tRNA(Tyr) in a two-step reaction: tyrosine is first activated by ATP to form Tyr-AMP and then transferred to the acceptor end of tRNA(Tyr). The protein is Tyrosine--tRNA ligase of Listeria welshimeri serovar 6b (strain ATCC 35897 / DSM 20650 / CCUG 15529 / CIP 8149 / NCTC 11857 / SLCC 5334 / V8).